Here is a 206-residue protein sequence, read N- to C-terminus: Putative transporter protein AmiS2 (206 aa).

Transmembrane regions (helical) follow at residues 4–24 (VGLL…LGTV), 29–49 (ASVL…VMLI), 56–76 (SAVL…YVGI), 86–106 (GIGW…FLSF), 113–133 (VFGV…LVLG), 142–162 (FTGW…AFLI), and 173–193 (VAAG…ILAA).

The protein belongs to the AmiS/UreI family.

It is found in the cell membrane. Functionally, possible transporter that might be responsible for the adsorption of amidase substrates or release of their hydrolysis products. In Rhodococcus erythropolis (Arthrobacter picolinophilus), this protein is Putative transporter protein AmiS2 (amiS2).